Consider the following 92-residue polypeptide: uncharacterized protein (92 aa).

The HTH cro/C1-type domain occupies 25-83; the sequence is LEEKLKQEKIDRKYLAQVTNIPYTTVSRIMRAEANREFNPEIDTILKIAKYFNCTMDEV. The segment at residues 36-55 is a DNA-binding region (H-T-H motif); sequence RKYLAQVTNIPYTTVSRIMR.

This is an uncharacterized protein from Rickettsia prowazekii (strain Madrid E).